Here is a 159-residue protein sequence, read N- to C-terminus: MNISIPQIIAAILNFIILLLIVKHFWFDKITAVVDSRQSEIINKIEDTDKNQKLALELKEKNELELSNAKNQGKTIVEEYKSKAENVYEDIVKEAHEEADRIIKKSRLEAERQKKNAEEEIRAEAVELAVLVSSKTLEKTIDDLEHRRLIKDFISKVGI.

A helical membrane pass occupies residues 2 to 22 (NISIPQIIAAILNFIILLLIV).

It belongs to the ATPase B chain family. In terms of assembly, F-type ATPases have 2 components, F(1) - the catalytic core - and F(0) - the membrane proton channel. F(1) has five subunits: alpha(3), beta(3), gamma(1), delta(1), epsilon(1). F(0) has three main subunits: a(1), b(2) and c(10-14). The alpha and beta chains form an alternating ring which encloses part of the gamma chain. F(1) is attached to F(0) by a central stalk formed by the gamma and epsilon chains, while a peripheral stalk is formed by the delta and b chains.

It is found in the cell membrane. In terms of biological role, f(1)F(0) ATP synthase produces ATP from ADP in the presence of a proton or sodium gradient. F-type ATPases consist of two structural domains, F(1) containing the extramembraneous catalytic core and F(0) containing the membrane proton channel, linked together by a central stalk and a peripheral stalk. During catalysis, ATP synthesis in the catalytic domain of F(1) is coupled via a rotary mechanism of the central stalk subunits to proton translocation. Component of the F(0) channel, it forms part of the peripheral stalk, linking F(1) to F(0). In Clostridium botulinum (strain Okra / Type B1), this protein is ATP synthase subunit b.